A 731-amino-acid chain; its full sequence is Catalase-peroxidase (731 aa).

Positions 98–227 form a cross-link, tryptophyl-tyrosyl-methioninium (Trp-Tyr) (with M-254); the sequence is WHAAGTYRTA…LAAIQMGLIY (130 aa). His99 serves as the catalytic Proton acceptor. A cross-link (tryptophyl-tyrosyl-methioninium (Tyr-Met) (with W-98)) is located at residues 227 to 254; the sequence is YVNPEGPQGNPHDDEGMARDMKETFKRM. His269 is a binding site for heme b.

Belongs to the peroxidase family. Peroxidase/catalase subfamily. Homodimer or homotetramer. Requires heme b as cofactor. Formation of the three residue Trp-Tyr-Met cross-link is important for the catalase, but not the peroxidase activity of the enzyme.

It catalyses the reaction H2O2 + AH2 = A + 2 H2O. The enzyme catalyses 2 H2O2 = O2 + 2 H2O. In terms of biological role, bifunctional enzyme with both catalase and broad-spectrum peroxidase activity. The sequence is that of Catalase-peroxidase from Sphingopyxis alaskensis (strain DSM 13593 / LMG 18877 / RB2256) (Sphingomonas alaskensis).